Here is a 712-residue protein sequence, read N- to C-terminus: MIFHCEVDKIVDQLQQLMQVYDLAALRDYWSYLERRLFSRLEDIYRPTIHKLKTSLFRFYLVYTIQTNRNDKAQEFFAKQATELQNQAEWKDWFVLPFLPSPDTNPTFATYFSRQWADTFIVSLHNFLSVLFQCMPVPVILNFDAECRRTNQVQEENEVLRQKLFALQAEIHRLKKEEQQPEEEEALVQHKLPPYVSNMDRLGDSELAMVCSQRNASLSQSPRVGFLSSLLPQSKKSPSRLSPAQGPPQAQSSAKKESFGGQGTKGKDPTSGAKDGKGLLSGLATGESGWSQHRQRRLQDHGKERKELFSTTTSQCAEKKPEASGPEAEPCPELHTEPVEPLTRTSLAGPEGGGVRPEQPFIVLGQEEYGEHHSSIMHCRVDCSGRRVASLDVDGVIKVWSFNPIMQTKASSISKSPLLSLEWATKRDRLLLLGSGVGTVRLYDTEAKKNLCEININDDMPRILSLACSPNGASFVCSAAAPSLTSQVDFSAPDIGSKGMNQVPGRLLLWDTKTMKQQLQFSLDPEPIAINCTAFNHNGNLLVTGAADGVIRLFDMQQHECAMSWRAHYGEVYSVEFSYDENTVYSIGEDGKFIQWNIHKSGLKVSEYSLPSDATGPFVLSGYSGYKQVQVPRGRLFAFDSEGNYMLTCSATGGVIYKLGGDEKVLESCLSLGGHRAPVVTVDWSTAMDCGTCLTASMDGKIKLTTLLAHKA.

Residues 148-180 (RRTNQVQEENEVLRQKLFALQAEIHRLKKEEQQ) are a coiled coil. A Phosphoserine modification is found at Ser-221. Over residues 230–243 (LLPQSKKSPSRLSP) the composition is skewed to low complexity. The tract at residues 230–336 (LLPQSKKSPS…EAEPCPELHT (107 aa)) is disordered. Phosphoserine occurs at positions 253 and 258. Residues 297–308 (RLQDHGKERKEL) are compositionally biased toward basic and acidic residues. WD repeat units lie at residues 371 to 410 (EHHS…QTKA), 413 to 453 (ISKS…NLCE), 480 to 520 (AAPS…QQLQ), 525 to 564 (PEPI…CAMS), 567 to 606 (AHYG…LKVS), 629 to 667 (VQVP…KVLE), and 674 to 712 (GHRA…AHKA).

The protein belongs to the WD repeat WDR91 family. Interacts with WDR81; involved in early to late endosome cargo transport. Interacts with BECN1; negatively regulates the PI3 kinase/PI3K activity associated with endosomal membranes.

It is found in the early endosome membrane. The protein localises to the late endosome membrane. Functions as a negative regulator of the PI3 kinase/PI3K activity associated with endosomal membranes via BECN1, a core subunit of the PI3K complex. By modifying the phosphatidylinositol 3-phosphate/PtdInsP3 content of endosomal membranes may regulate endosome fusion, recycling, sorting and early to late endosome transport. It is for instance, required for the delivery of cargos like BST2/tetherin from early to late endosome and thereby participates indirectly to their degradation by the lysosome. May play a role in meiosis. This chain is WD repeat-containing protein 91, found in Pongo abelii (Sumatran orangutan).